We begin with the raw amino-acid sequence, 201 residues long: Peptidyl-prolyl cis-trans isomerase CYP19-4 (201 aa).

The N-terminal stretch at 1–23 (MAKASFILLGTLFLFGAIASIQA) is a signal peptide. Residues 35–198 (YFDVEIDGKS…SKVVIADSGE (164 aa)) form the PPIase cyclophilin-type domain.

It belongs to the cyclophilin-type PPIase family. As to quaternary structure, interacts with EMB30/GNOM. In terms of tissue distribution, ubiquitous, mostly in aerial organs (at protein level).

The protein resides in the cytoplasm. The protein localises to the membrane. Its subcellular location is the endoplasmic reticulum. It is found in the secreted. The enzyme catalyses [protein]-peptidylproline (omega=180) = [protein]-peptidylproline (omega=0). Its activity is regulated as follows. Binds cyclosporin A (CsA). CsA mediates some of its effects via an inhibitory action on PPIase. In terms of biological role, PPIases accelerate the folding of proteins. It catalyzes the cis-trans isomerization of proline imidic peptide bonds in oligopeptides. May be involved during embryogenesis and organ development by regulating the folding of EMB30/GNOM, and thus, by modulating its activity. The polypeptide is Peptidyl-prolyl cis-trans isomerase CYP19-4 (CYP19-4) (Arabidopsis thaliana (Mouse-ear cress)).